The sequence spans 255 residues: Homeobox-leucine zipper protein ATHB-23 (255 aa).

The segment at residues 68-127 (MGEKKRRLNMEQLKALEKDFELGNKLESDRKLELARALGLQPRQIAIWFQNRRARSKTKQ) is a DNA-binding region (homeobox). A leucine-zipper region spans residues 128–163 (LEKDYDMLKRQFESLRDENEVLQTQNQKLQAQVMAL).

This sequence belongs to the HD-ZIP homeobox family. Class I subfamily. Expressed in young leaves, in the adaxial domain of leaf primordia and the rib meristem. Expressed in the styles of flowers and siliques.

Its subcellular location is the nucleus. Functionally, probable transcription factor. The polypeptide is Homeobox-leucine zipper protein ATHB-23 (ATHB-23) (Arabidopsis thaliana (Mouse-ear cress)).